The chain runs to 253 residues: MRLLIEQPRTMSSGSSNFLLVPIPEYPVLDCVPNKNVKIVVLGASNVGKTALIVRFLTKRFIGDYEANTGALYSRKINLDGEQVSLQVQDTPCVSLQDDADGLYCQEQINRSIYWADGYVLVFSITDLNSYRTIQPLYQHVRRIHPSGNIPVIIVGNKSDLLRARQVSDPEGKALADELGGLYFEASARENHESVQAAFLHLCQEVSRALGGGNGEKRKGGLHLARPKSPNMQELKRRFRQVLSSKVKSATAL.

GTP is bound by residues 43 to 50 (GASNVGKT), 90 to 97 (DTPCVSLQ), and 157 to 160 (NKSD). The tract at residues 213–233 (GNGEKRKGGLHLARPKSPNMQ) is disordered.

This sequence belongs to the small GTPase superfamily. Ras family.

The protein resides in the nucleus. Its subcellular location is the nucleolus. The catalysed reaction is GTP + H2O = GDP + phosphate + H(+). Regulator of rDNA transcription. The chain is Ras-like protein family member 11A-like from Danio rerio (Zebrafish).